Consider the following 646-residue polypeptide: Long-chain fatty acid transport protein 1 (646 aa).

Over 1-13 (MRAPGAGSASVAS) the chain is Extracellular. A helical membrane pass occupies residues 14 to 34 (LVLLWLLGLPWTWSTAAALGV). Residues 35-646 (YVGGGGWRFL…TRICSGAFAL (612 aa)) lie on the Cytoplasmic side of the membrane. The segment at 191–475 (EMSGELGKSL…YISESATSKK (285 aa)) is sufficient for oligomerization. An AMP-binding site is contributed by 246 to 257 (YIYTSGTTGLPK).

It belongs to the ATP-dependent AMP-binding enzyme family. As to quaternary structure, self-associates. May function as a homodimer. Interacts with EPRS1; mediates the translocation of SLC27A1 from the cytoplasm to the plasma membrane thereby increasing the uptake of long-chain fatty acids. Interacts with DGAT2 and this interaction is enhanced in the presence of ZFYVE1.

Its subcellular location is the cell membrane. The protein localises to the endomembrane system. The protein resides in the cytoplasm. The enzyme catalyses a fatty acid(in) = a fatty acid(out). The catalysed reaction is (9Z)-octadecenoate(out) = (9Z)-octadecenoate(in). It carries out the reaction hexadecanoate(out) = hexadecanoate(in). It catalyses the reaction (5Z,8Z,11Z,14Z)-eicosatetraenoate(out) = (5Z,8Z,11Z,14Z)-eicosatetraenoate(in). The enzyme catalyses (9Z,12Z)-octadecadienoate(out) = (9Z,12Z)-octadecadienoate(in). The catalysed reaction is a long-chain fatty acid + ATP + CoA = a long-chain fatty acyl-CoA + AMP + diphosphate. It carries out the reaction (5Z,8Z,11Z,14Z)-eicosatetraenoate + ATP + CoA = (5Z,8Z,11Z,14Z)-eicosatetraenoyl-CoA + AMP + diphosphate. It catalyses the reaction a very long-chain fatty acid + ATP + CoA = a very long-chain fatty acyl-CoA + AMP + diphosphate. The enzyme catalyses tetracosanoate + ATP + CoA = tetracosanoyl-CoA + AMP + diphosphate. Its activity is regulated as follows. Inhibited by Triacsin C. Functionally, mediates the import of long-chain fatty acids (LCFA) into the cell by facilitating their transport at the plasma membrane. Also functions as an acyl-CoA ligase catalyzing the ATP-dependent formation of fatty acyl-CoA using LCFA and very-long-chain fatty acids (VLCFA) as substrates, which prevents fatty acid efflux from cells and might drive more fatty acid uptake. May act directly as a bona fide transporter, or alternatively, in a cytoplasmic or membrane-associated multimeric protein complex to trap and draw fatty acids towards accumulation. Plays a pivotal role in regulating available LCFA substrates from exogenous sources in tissues undergoing high levels of beta-oxidation or triglyceride synthesis. May be involved in regulation of cholesterol metabolism. Probably involved in fatty acid transport across the blood barrier. The chain is Long-chain fatty acid transport protein 1 from Bos taurus (Bovine).